Here is a 333-residue protein sequence, read N- to C-terminus: Methionyl-tRNA formyltransferase (333 aa).

Residue 106-109 coordinates (6S)-5,6,7,8-tetrahydrofolate; the sequence is SLLP.

This sequence belongs to the Fmt family.

It catalyses the reaction L-methionyl-tRNA(fMet) + (6R)-10-formyltetrahydrofolate = N-formyl-L-methionyl-tRNA(fMet) + (6S)-5,6,7,8-tetrahydrofolate + H(+). Its function is as follows. Attaches a formyl group to the free amino group of methionyl-tRNA(fMet). The formyl group appears to play a dual role in the initiator identity of N-formylmethionyl-tRNA by promoting its recognition by IF2 and preventing the misappropriation of this tRNA by the elongation apparatus. In Elusimicrobium minutum (strain Pei191), this protein is Methionyl-tRNA formyltransferase.